The chain runs to 256 residues: Protein TV0584 (256 aa).

It belongs to the CinA family.

The chain is Protein TV0584 from Thermoplasma volcanium (strain ATCC 51530 / DSM 4299 / JCM 9571 / NBRC 15438 / GSS1).